We begin with the raw amino-acid sequence, 368 residues long: Propane 2-monooxygenase, hydroxylase component small subunit (368 aa).

It belongs to the TmoE/XamoE family. The propane 2-monooxygenase multicomponent enzyme system is composed of an electron transfer component and a monooxygenase component interacting with the effector protein MimD. The electron transfer component is composed of a reductase (MimB), and the monooxygenase component is formed by a large subunit (MimA) and a small subunit (MimC). Requires the presence of the chaperonin-like protein MimG to ensure a productive folding, resulting of a soluble MimC, which leads to the active form of MimABCD.

The catalysed reaction is propane + NADH + O2 + H(+) = propan-2-ol + NAD(+) + H2O. It carries out the reaction acetone + NADH + O2 + H(+) = hydroxyacetone + NAD(+) + H2O. The enzyme catalyses butan-2-one + NADH + O2 + H(+) = 1-hydroxy-2-butanone + NAD(+) + H2O. It catalyses the reaction phenol + NADH + O2 + H(+) = hydroquinone + NAD(+) + H2O. Its function is as follows. Component of the propane 2-monooxygenase multicomponent enzyme system which is involved in the degradation of propane via the O2-dependent hydroxylation of propane. Also involved in the degradation of acetone via the O2-dependent hydroxylation of acetone. Also able to catalyze the oxidation of phenol, methylethylketone (2-butanone), 1-propanol and 2-propanol. The polypeptide is Propane 2-monooxygenase, hydroxylase component small subunit (Mycolicibacterium goodii (Mycobacterium goodii)).